A 151-amino-acid polypeptide reads, in one-letter code: Ubiquitin-conjugating enzyme E2 2 (151 aa).

Residues 1-26 are disordered; sequence MSTSARRRLMRDFKRMQTDPPAGVSA. Residues 4–150 enclose the UBC core domain; the sequence is SARRRLMRDF…VRETVEKSWE (147 aa). The Glycyl thioester intermediate role is filled by Cys88.

This sequence belongs to the ubiquitin-conjugating enzyme family.

The protein localises to the cytoplasm. It localises to the nucleus. It carries out the reaction S-ubiquitinyl-[E1 ubiquitin-activating enzyme]-L-cysteine + [E2 ubiquitin-conjugating enzyme]-L-cysteine = [E1 ubiquitin-activating enzyme]-L-cysteine + S-ubiquitinyl-[E2 ubiquitin-conjugating enzyme]-L-cysteine.. The protein operates within protein modification; protein ubiquitination. In terms of biological role, catalyzes the covalent attachment of ubiquitin to other proteins. Plays a role in transcription regulation by catalyzing the monoubiquitination of histone H2B to form H2BK123ub1. H2BK123ub1 gives a specific tag for epigenetic transcriptional activation and is also a prerequisite for H3K4me and H3K79me formation. Also involved in postreplication repair of UV-damaged DNA, in N-end rule-dependent protein degradation and in sporulation. The polypeptide is Ubiquitin-conjugating enzyme E2 2 (uvsJ) (Emericella nidulans (strain FGSC A4 / ATCC 38163 / CBS 112.46 / NRRL 194 / M139) (Aspergillus nidulans)).